Reading from the N-terminus, the 313-residue chain is Leucine-rich repeat-containing protein 52 (313 aa).

The first 23 residues, 1–23 (MSLASGPGPGWLLFSFGMGLVSG), serve as a signal peptide directing secretion. An LRRNT domain is found at 24-53 (SKCPNNCLCQAQEVICTGKQLTEYPLDIPL). The Extracellular portion of the chain corresponds to 24-244 (SKCPNNCLCQ…MCITHLDHKD (221 aa)). 2 disulfide bridges follow: Cys26-Cys32 and Cys30-Cys39. LRR repeat units lie at residues 54–75 (NTRRLFLNENRITSLPAMHLGL), 78–99 (DLVYLDCQNNRIREVMDYTFIG), 102–123 (KLIYLDLSSNNLTSISPFTFSV), 126–148 (NLVQLNIANNPHLLSLHKFTFAN), and 151–172 (SLRYLDLRNTGLQTLDSAALYH). 2 N-linked (GlcNAc...) asparagine glycosylation sites follow: Asn112 and Asn148. The region spanning 184-238 (NPWKCNCSFLDFAIFLIVFHMDPSDDLNATCVEPTELTGWPITRVGNPLRYMCIT) is the LRRCT domain. 2 cysteine pairs are disulfide-bonded: Cys188/Cys214 and Cys190/Cys236. Residues Asn189 and Asn211 are each glycosylated (N-linked (GlcNAc...) asparagine). The helical transmembrane segment at 245–265 (YIFLLLIGFCIFAAGTVAAWL) threads the bilayer. At 266-313 (TGVCAVLYQNTRHKSSEEDEDEAGTRVEVSRRIFQTQTSSVQEFPQLI) the chain is on the cytoplasmic side.

In terms of assembly, may interact with KCNU1; this interaction may be required for LRRC52 stability and may change the channel gating properties. Interacts with KCNMA1. In terms of processing, N-glycosylated. Mainly expressed in testis and skeletal muscle.

Its subcellular location is the cell membrane. Functionally, auxiliary protein of the large-conductance, voltage and calcium-activated potassium channel (BK alpha). Modulates gating properties by producing a marked shift in the BK channel's voltage dependence of activation in the hyperpolarizing direction, and in the absence of calcium. KCNU1 channel auxiliary protein. Modulates KCNU1 gating properties. This Homo sapiens (Human) protein is Leucine-rich repeat-containing protein 52 (LRRC52).